We begin with the raw amino-acid sequence, 225 residues long: PKHD-type hydroxylase YbiX (225 aa).

The region spanning 78 to 177 (TLSTPLFNRY…RVASFMWIQS (100 aa)) is the Fe2OG dioxygenase domain. 3 residues coordinate Fe cation: histidine 96, aspartate 98, and histidine 158. Arginine 168 serves as a coordination point for 2-oxoglutarate.

The cofactor is Fe(2+). L-ascorbate is required as a cofactor.

The polypeptide is PKHD-type hydroxylase YbiX (Escherichia fergusonii (strain ATCC 35469 / DSM 13698 / CCUG 18766 / IAM 14443 / JCM 21226 / LMG 7866 / NBRC 102419 / NCTC 12128 / CDC 0568-73)).